Here is a 174-residue protein sequence, read N- to C-terminus: 3-hydroxyanthranilate 3,4-dioxygenase (174 aa).

An O2-binding site is contributed by Arg-47. Fe cation is bound by residues His-51, Glu-57, and His-95. Glu-57 is a binding site for substrate. Residues Arg-99 and Glu-110 each coordinate substrate. Positions 125, 128, 162, and 165 each coordinate Fe cation.

The protein belongs to the 3-HAO family. Homodimer. The cofactor is Fe(2+).

It carries out the reaction 3-hydroxyanthranilate + O2 = (2Z,4Z)-2-amino-3-carboxymuconate 6-semialdehyde. The protein operates within cofactor biosynthesis; NAD(+) biosynthesis; quinolinate from L-kynurenine: step 3/3. Inhibited by 4-chloro-3-hydroxyanthranilate. Mechanism of inactivation involves the oxidation of the catalytic active site Fe(2+) to the catalytically inactive Fe(3+) oxidation state, superoxide production, and formation of two disulfide bonds between Cys-125 and Cys-128, and Cys-162 and Cys-165. Enzyme can be reactivated under reducing conditions. Catalyzes the oxidative ring opening of 3-hydroxyanthranilate to 2-amino-3-carboxymuconate semialdehyde, which spontaneously cyclizes to quinolinate. This chain is 3-hydroxyanthranilate 3,4-dioxygenase, found in Cupriavidus metallidurans (strain ATCC 43123 / DSM 2839 / NBRC 102507 / CH34) (Ralstonia metallidurans).